A 497-amino-acid chain; its full sequence is Gasdermin-E (497 aa).

Positions 1–56 are membrane targeting domain; sequence MFAKATRSFLREVDAEGDLIAVSNLNDSDKSQLLSLVTKKKRFWCWQRPKYQFLSV. The residue at position 45 (Cys-45) is an S-(2-succinyl)cysteine. Lys-120 participates in a covalent cross-link: Glycyl lysine isopeptide (Lys-Gly) (interchain with G-Cter in ubiquitin). S-(2-succinyl)cysteine is present on residues Cys-156, Cys-168, and Cys-180. Lys-189 participates in a covalent cross-link: Glycyl lysine isopeptide (Lys-Gly) (interchain with G-Cter in ubiquitin). 5 positions are modified to S-(2-succinyl)cysteine: Cys-235, Cys-371, Cys-409, Cys-418, and Cys-491.

This sequence belongs to the gasdermin family. Homooligomer; homooligomeric ring-shaped pore complex containing 27-28 subunits when inserted in the membrane. Cleavage at Asp-270 by CASP3 (mature and uncleaved precursor forms) or granzyme B (GZMB) relieves autoinhibition and is sufficient to initiate pyroptosis. In terms of processing, succination by the Krebs cycle intermediate fumarate, which leads to S-(2-succinyl)cysteine residues, inhibits processing by caspases, and ability to initiate pyroptosis. Succination modification is catalyzed by a non-enzymatic reaction caused by an accumulation of fumarate. Post-translationally, ubiquitinated on Lys-120 and Lys-189 via 'Lys-48'-linked polyubiquitin chains, leading to proteasomal degradation. Deubiquitinated by USP48, leading to increased stability. Palmitoylated.

The protein localises to the cell membrane. It is found in the cytoplasm. Its subcellular location is the cytosol. With respect to regulation, the full-length protein before cleavage is inactive: intramolecular interactions between N- and C-terminal domains mediate autoinhibition in the absence of activation signal. The intrinsic pyroptosis-inducing activity is carried by the released N-terminal moiety (Gasdermin-E, N-terminal) following cleavage by CASP3 or granzyme B (GZMB). Activated by NLRP1 in the absence of GSDMD expression: NLRP1 cleaves and activates CASP8, promoting downstream activation of CASP3 and subsequent activation of GSDME. Functionally, precursor of a pore-forming protein that converts non-inflammatory apoptosis to pyroptosis. This form constitutes the precursor of the pore-forming protein: upon cleavage, the released N-terminal moiety (Gasdermin-E, N-terminal) binds to membranes and forms pores, triggering pyroptosis. In terms of biological role, pore-forming protein produced by cleavage by CASP3 or granzyme B (GZMB), which converts non-inflammatory apoptosis to pyroptosis or promotes granzyme-mediated pyroptosis, respectively. After cleavage, moves to the plasma membrane, homooligomerizes within the membrane and forms pores of 10-15 nanometers (nm) of inner diameter, allowing the release of mature interleukins (IL1B and IL16) and triggering pyroptosis. Binds to inner leaflet lipids, bisphosphorylated phosphatidylinositols, such as phosphatidylinositol (4,5)-bisphosphate. Cleavage by CASP3 switches CASP3-mediated apoptosis induced by TNF or danger signals, such as chemotherapy drugs, to pyroptosis. Mediates secondary necrosis downstream of the mitochondrial apoptotic pathway and CASP3 activation as well as in response to viral agents. Exhibits bactericidal activity. Cleavage by GZMB promotes tumor suppressor activity by triggering robust anti-tumor immunity. Suppresses tumors by mediating granzyme-mediated pyroptosis in target cells of natural killer (NK) cells: cleavage by granzyme B (GZMB), delivered to target cells from NK-cells, triggers pyroptosis of tumor cells and tumor suppression. May play a role in the p53/TP53-regulated cellular response to DNA damage. The sequence is that of Gasdermin-E from Equus caballus (Horse).